Reading from the N-terminus, the 207-residue chain is Guanylate kinase (207 aa).

Positions 4–184 (GILFIISAPS…AINDLRTIII (181 aa)) constitute a Guanylate kinase-like domain. Position 11–18 (11–18 (APSGTGKS)) interacts with ATP.

This sequence belongs to the guanylate kinase family.

Its subcellular location is the cytoplasm. It carries out the reaction GMP + ATP = GDP + ADP. Functionally, essential for recycling GMP and indirectly, cGMP. This chain is Guanylate kinase, found in Buchnera aphidicola subsp. Schizaphis graminum (strain Sg).